We begin with the raw amino-acid sequence, 640 residues long: Biosynthetic arginine decarboxylase (640 aa).

Position 109 is an N6-(pyridoxal phosphate)lysine (Lys109). 291-301 (LDVGGGLGVDY) lines the substrate pocket.

Belongs to the Orn/Lys/Arg decarboxylase class-II family. SpeA subfamily. Mg(2+) serves as cofactor. Requires pyridoxal 5'-phosphate as cofactor.

It carries out the reaction L-arginine + H(+) = agmatine + CO2. The protein operates within amine and polyamine biosynthesis; agmatine biosynthesis; agmatine from L-arginine: step 1/1. Catalyzes the biosynthesis of agmatine from arginine. In Synechococcus sp. (strain RCC307), this protein is Biosynthetic arginine decarboxylase.